The chain runs to 973 residues: MERMNWLSRLASRGPGHRVPQGASLQTPVMADPETCLMVFKNHWSQVVRILERQGPRAAPGGADDLSAVRNHTYQMLTLLAEDRAVPLVPTAPGPLLEFALREDLLTRVLTWQLQWDELGDGVEERRAEQLKLFEMLVSEARQPLLRHGPVREALLILLDACGRPVPSSPALDEGLVLLLSQLCVCLAREPSLLEFFLQPPPEPGAAPRLLLFSRLVPFVHREGTLGQQARDALLLLMALSAGSPTVGCYIADHSYFCPVLATGLSALYSSLPRKIEVPGDDWHCLRREDWLGVPALALFMSSLEFCNAVIQVAHPLVQKQLVDYIHNGFLVPVMGPALHKTSVEEMIASTAYLELFLRSISEPALLRTFLRFLLLHRHDTHTILDTLVARIGSNSRLCMVSLSLFRTLLNLSCEDVLLQLVLRYLVPCNHVMLSQKPAVRDVDLYGRAADKFLSLIPRCCRHHASSPSRPEHASWARGPGSPSVDSSSVVTVHRPSTPSRLALFLRQQSLGGSESPAPAPRSPGLATSPASSPGRRPSPVEEPGELEDNYLEYLREARRGVDRCVQACRTWSAPYDGERPPPEPSPVGSRTKKRSLLPEEGRDNAGGGEEEELGSGGLAGGARESLGHLPPPQLNGLPGPWPEGAKKVRRVPKEGAGEPLEDTSEGMAGLEGFGQELRELEVALSNGGAGSEPPLEPSLPLEEEEAYESFTCSPEPPGPFLSSPLRTLNQLPSQPFTGPFMAVLFAKLENMLQNSVYVNFLLTGLVAQLACHPQPLLRSFLLNTNMVFQPSVKSLLQVLGSVKNKIESFAASQEDFPALLSKAKKYLIARGKLDWTEGPAAGPAPRRSDSLVKSRRPSLGELLLRHAHSPTRARQAAQMVLQPGRDGGAGLGLGGGSPGASTPVLPARGGAPERQGEALRVKNAVYCAVIFPEFLKELAAISQAHAVTSPFLLDTSEEGSGPPVSGFGPLNP.

Disordered regions lie at residues 466–493 (SSPS…VVTV), 510–547 (SLGG…PGEL), and 573–647 (SAPY…EGAK). Ser467 is modified (phosphoserine). The segment covering 482–493 (SPSVDSSSVVTV) has biased composition (low complexity). Residues Ser510, Ser523, Ser529, and Ser533 each carry the phosphoserine modification. Composition is skewed to low complexity over residues 529–538 (SPASSPGRRP) and 622–639 (GARE…NGLP). Ser859 and Ser898 each carry phosphoserine.

The protein belongs to the FHIP family. As to quaternary structure, component of the FTS/Hook/FHIP complex (FHF complex), composed of AKTIP/FTS, FHIP1B, and one or more members of the Hook family of proteins HOOK1, HOOK2, and HOOK3. The FHF complex associates with the homotypic vesicular sorting complex (the HOPS complex).

Its function is as follows. Component of the FTS/Hook/FHIP complex (FHF complex). The FHF complex may function to promote vesicle trafficking and/or fusion via the homotypic vesicular protein sorting complex (the HOPS complex). FHF complex promotes the distribution of AP-4 complex to the perinuclear area of the cell. The chain is FHF complex subunit HOOK-interacting protein 1B (FHIP1B) from Bos taurus (Bovine).